The following is a 260-amino-acid chain: 5'-nucleotidase SurE (260 aa).

4 residues coordinate a divalent metal cation: Asp-8, Asp-9, Ser-39, and Asn-96.

This sequence belongs to the SurE nucleotidase family. A divalent metal cation is required as a cofactor.

It is found in the cytoplasm. The enzyme catalyses a ribonucleoside 5'-phosphate + H2O = a ribonucleoside + phosphate. Functionally, nucleotidase that shows phosphatase activity on nucleoside 5'-monophosphates. The chain is 5'-nucleotidase SurE from Moorella thermoacetica (strain ATCC 39073 / JCM 9320).